A 404-amino-acid chain; its full sequence is Putative replication protein C (404 aa).

The tract at residues 249–287 (PDQIERHKQNSHPESTNEFEPSSREEQGERPSPAIEPQR) is disordered.

To A.rhizogenes possible replication protein C (RepC).

The sequence is that of Putative replication protein C from Sinorhizobium fredii (strain NBRC 101917 / NGR234).